A 446-amino-acid polypeptide reads, in one-letter code: Argininosuccinate lyase (446 aa).

The protein belongs to the lyase 1 family. Argininosuccinate lyase subfamily.

It localises to the cytoplasm. The enzyme catalyses 2-(N(omega)-L-arginino)succinate = fumarate + L-arginine. The protein operates within amino-acid biosynthesis; L-arginine biosynthesis; L-arginine from L-ornithine and carbamoyl phosphate: step 3/3. In Bacteroides thetaiotaomicron (strain ATCC 29148 / DSM 2079 / JCM 5827 / CCUG 10774 / NCTC 10582 / VPI-5482 / E50), this protein is Argininosuccinate lyase.